We begin with the raw amino-acid sequence, 634 residues long: MWLQQRLKGLPGLLSSSWARRLLCLLGLLLLLLWFGGSGARRAAGGLHLLPWSRGEPGAAEPSACLEAATRAWRGLRERGEVVPLGPGVPALVANGFLALDVAANRLWVTPGEREPAVAPDFVPFVQLRPLSALAEAGEAVLLLREGLLRRVRCLQLGSPGPGPVAAGPGPASVSGLAAGSGRDCVLLQEDFLAHRGRPHVYLQRIQLNNPTERVAALQTVGPTAGPAPKAFTSTLEKVGDHQFLLYSGRSPPTPTGLVHLVVVAAKKLVNRLQVAPKTQLDETVLWVVHVSGPINPQVLKSKAAKELKALQDLARKEMLELLDMPAAELLQDHQLLWAQLFSPGVEMKKITDTHTPSGLTVNLTLYYMLSCSPAPLLSPSLSHRERDQMESTLNYEDHCFSGHATMHAENLWPGRLSSVQQILQLSDLWRLTLQKRGCKGLVKVGAPGILQGMVLSFGGLQFTENHLQFQADPDVLHNSYALHGIRYKNDHINLAVLADAEGKPYLHVSVESRGQPVKIYACKAGCLDEPVELTSAPTGHTFSVMVTQPITPLLYISTDLTHLQDLRHTLHLKAILAHDEHMAQQDPGLPFLFWFSVASLITLFHLFLFKLIYNEYCGPGAKPLFRSKEDPSV.

An N-terminal signal peptide occupies residues 1-40 (MWLQQRLKGLPGLLSSSWARRLLCLLGLLLLLLWFGGSGA). Residues 41 to 589 (RRAAGGLHLL…DEHMAQQDPG (549 aa)) lie on the Extracellular side of the membrane. The N-linked (GlcNAc...) asparagine glycan is linked to N363. The chain crosses the membrane as a helical span at residues 590–610 (LPFLFWFSVASLITLFHLFLF). Residues 611–634 (KLIYNEYCGPGAKPLFRSKEDPSV) are Cytoplasmic-facing.

The protein localises to the membrane. This is an uncharacterized protein from Homo sapiens (Human).